A 314-amino-acid polypeptide reads, in one-letter code: Ribonuclease Z (314 aa).

The Zn(2+) site is built by His-61, His-63, Asp-65, His-66, His-139, Asp-211, and His-269. The active-site Proton acceptor is the Asp-65.

This sequence belongs to the RNase Z family. As to quaternary structure, homodimer. It depends on Zn(2+) as a cofactor.

The catalysed reaction is Endonucleolytic cleavage of RNA, removing extra 3' nucleotides from tRNA precursor, generating 3' termini of tRNAs. A 3'-hydroxy group is left at the tRNA terminus and a 5'-phosphoryl group is left at the trailer molecule.. Functionally, zinc phosphodiesterase, which displays some tRNA 3'-processing endonuclease activity. Probably involved in tRNA maturation, by removing a 3'-trailer from precursor tRNA. In Gemmatimonas aurantiaca (strain DSM 14586 / JCM 11422 / NBRC 100505 / T-27), this protein is Ribonuclease Z.